We begin with the raw amino-acid sequence, 273 residues long: Ribosomal RNA small subunit methyltransferase A (273 aa).

Asn-18, Leu-20, Gly-45, Glu-66, Asp-91, and Asn-113 together coordinate S-adenosyl-L-methionine.

This sequence belongs to the class I-like SAM-binding methyltransferase superfamily. rRNA adenine N(6)-methyltransferase family. RsmA subfamily.

Its subcellular location is the cytoplasm. It catalyses the reaction adenosine(1518)/adenosine(1519) in 16S rRNA + 4 S-adenosyl-L-methionine = N(6)-dimethyladenosine(1518)/N(6)-dimethyladenosine(1519) in 16S rRNA + 4 S-adenosyl-L-homocysteine + 4 H(+). Its function is as follows. Specifically dimethylates two adjacent adenosines (A1518 and A1519) in the loop of a conserved hairpin near the 3'-end of 16S rRNA in the 30S particle. May play a critical role in biogenesis of 30S subunits. This is Ribosomal RNA small subunit methyltransferase A from Cronobacter sakazakii (strain ATCC BAA-894) (Enterobacter sakazakii).